The primary structure comprises 75 residues: Small ribosomal subunit protein bS18 (75 aa).

This sequence belongs to the bacterial ribosomal protein bS18 family. As to quaternary structure, part of the 30S ribosomal subunit. Forms a tight heterodimer with protein bS6.

In terms of biological role, binds as a heterodimer with protein bS6 to the central domain of the 16S rRNA, where it helps stabilize the platform of the 30S subunit. This is Small ribosomal subunit protein bS18 from Desulforudis audaxviator (strain MP104C).